The following is a 162-amino-acid chain: Circumsporozoite protein-related antigen (162 aa).

The signal sequence occupies residues 1–16 (MKILSVFFLALFFIIF). Disordered stretches follow at residues 24–44 (KTNK…KGSG) and 109–162 (PFKI…GPEH). The segment covering 114–130 (SSDPADNANPDADSESN) has biased composition (low complexity). Residues 137–162 (PQVTAQDVTPEQPQGDDNNLVSGPEH) show a composition bias toward polar residues.

The protein is Circumsporozoite protein-related antigen of Plasmodium falciparum.